Reading from the N-terminus, the 423-residue chain is Gamma-glutamyl phosphate reductase (423 aa).

Belongs to the gamma-glutamyl phosphate reductase family.

The protein localises to the cytoplasm. It carries out the reaction L-glutamate 5-semialdehyde + phosphate + NADP(+) = L-glutamyl 5-phosphate + NADPH + H(+). Its pathway is amino-acid biosynthesis; L-proline biosynthesis; L-glutamate 5-semialdehyde from L-glutamate: step 2/2. In terms of biological role, catalyzes the NADPH-dependent reduction of L-glutamate 5-phosphate into L-glutamate 5-semialdehyde and phosphate. The product spontaneously undergoes cyclization to form 1-pyrroline-5-carboxylate. This Paramagnetospirillum magneticum (strain ATCC 700264 / AMB-1) (Magnetospirillum magneticum) protein is Gamma-glutamyl phosphate reductase.